The primary structure comprises 190 residues: Peptidoglycan recognition protein 1 (190 aa).

The first 21 residues, 1–21, serve as a signal peptide directing secretion; that stretch reads MSRRYTPLAWVLLALLGLGAA. Position 22 is a pyrrolidone carboxylic acid (Q22). 3 cysteine pairs are disulfide-bonded: C24–C148, C40–C85, and C61–C67. The 129-residue stretch at 46-174 folds into the N-acetylmuramoyl-L-alanine amidase domain; it reads QPVRYVVVSH…RDVQQTLSPG (129 aa).

This sequence belongs to the N-acetylmuramoyl-L-alanine amidase 2 family. As to quaternary structure, homodimer; disulfide-linked.

The protein localises to the secreted. It localises to the cytoplasmic granule. Functionally, innate immunity protein that plays several important functions in antimicrobial and antitumor defense systems. Acts as a pattern receptor that binds to murein peptidoglycans (PGN) of Gram-positive bacteria and thus provides bactericidal activity. Forms an equimolar complex with heat shock protein HSPA1A and induces programmed cell death through apoptosis and necroptosis in tumor cell lines by activating the TNFR1 receptor on the target cell membrane. In addition, acts in complex with the Ca(2+)-binding protein S100A4 as a chemoattractant able to induce lymphocyte movement. Mechanistically, this complex acts as a ligand of the chemotactic receptors CCR5 and CXCR3 which are present on the cells of the immune system. Promotes also the activation of lymphocytes that become able to kill virus-infected cells as well as tumor cells by modulating the spectrum of their target-cell specificity. Induction of cytotoxicity on monocyte surface requires interaction with TREM1 receptor. In Bos indicus (Zebu), this protein is Peptidoglycan recognition protein 1 (PGLYRP1).